We begin with the raw amino-acid sequence, 178 residues long: ATP-dependent protease subunit HslV (178 aa).

The active site involves T7. Residues G162, C165, and T168 each contribute to the Na(+) site.

This sequence belongs to the peptidase T1B family. HslV subfamily. As to quaternary structure, a double ring-shaped homohexamer of HslV is capped on each side by a ring-shaped HslU homohexamer. The assembly of the HslU/HslV complex is dependent on binding of ATP.

The protein localises to the cytoplasm. The catalysed reaction is ATP-dependent cleavage of peptide bonds with broad specificity.. Its activity is regulated as follows. Allosterically activated by HslU binding. In terms of biological role, protease subunit of a proteasome-like degradation complex believed to be a general protein degrading machinery. The sequence is that of ATP-dependent protease subunit HslV from Leptothrix cholodnii (strain ATCC 51168 / LMG 8142 / SP-6) (Leptothrix discophora (strain SP-6)).